Here is a 309-residue protein sequence, read N- to C-terminus: Porphobilinogen deaminase (309 aa).

Cys244 bears the S-(dipyrrolylmethanemethyl)cysteine mark.

It belongs to the HMBS family. In terms of assembly, monomer. Dipyrromethane is required as a cofactor.

It catalyses the reaction 4 porphobilinogen + H2O = hydroxymethylbilane + 4 NH4(+). It participates in porphyrin-containing compound metabolism; protoporphyrin-IX biosynthesis; coproporphyrinogen-III from 5-aminolevulinate: step 2/4. Tetrapolymerization of the monopyrrole PBG into the hydroxymethylbilane pre-uroporphyrinogen in several discrete steps. The sequence is that of Porphobilinogen deaminase from Rhizobium meliloti (strain 1021) (Ensifer meliloti).